Reading from the N-terminus, the 512-residue chain is Histidine ammonia-lyase (512 aa).

The segment at residues 144–146 is a cross-link (5-imidazolinone (Ala-Gly)); the sequence is ASG. A 2,3-didehydroalanine (Ser) modification is found at S145.

The protein belongs to the PAL/histidase family. Post-translationally, contains an active site 4-methylidene-imidazol-5-one (MIO), which is formed autocatalytically by cyclization and dehydration of residues Ala-Ser-Gly.

It localises to the cytoplasm. The catalysed reaction is L-histidine = trans-urocanate + NH4(+). The protein operates within amino-acid degradation; L-histidine degradation into L-glutamate; N-formimidoyl-L-glutamate from L-histidine: step 1/3. This is Histidine ammonia-lyase from Desulfotalea psychrophila (strain LSv54 / DSM 12343).